The sequence spans 425 residues: Beta-1,4-galactosyltransferase galt-1 (425 aa).

Residues 1-8 are Cytoplasmic-facing; sequence MPRITASK. Residues 9 to 29 traverse the membrane as a helical; Signal-anchor for type II membrane protein segment; sequence IVLLIALSFCITVIYHFPIAT. Topologically, residues 30-425 are lumenal; the sequence is RSSKEYDEYG…FDSVVGLLDL (396 aa). Asn-109 and Asn-152 each carry an N-linked (GlcNAc...) asparagine glycan. The region spanning 189 to 394 is the GT92 domain; sequence KMSICVPALF…LLRVYHYKDK (206 aa).

The protein belongs to the glycosyltransferase 92 family. Requires Mn(2+) as cofactor. N-glycosylated. Expressed in intestine and coelomocytes.

Its subcellular location is the golgi apparatus. The protein localises to the golgi stack membrane. Its activity is regulated as follows. Inhibited by EDTA, Cu(2+) and Zn(2+). Its function is as follows. Catalyzes the transfer of beta-galactose from UDP-galactose to position 4 of alpha-1,6-linked fucose at the reducing end GlcNAc in N-glycan cores. Involved in susceptibility to the nematotoxic C.cinerea galectin Cgl2, likely by contributing to the synthesis of core alpha-1,6-fucosylated N-glycans to which Cgl2 binds. The chain is Beta-1,4-galactosyltransferase galt-1 from Caenorhabditis elegans.